A 293-amino-acid chain; its full sequence is MFISLWEFFYGHFFRFWMKWLLRQMTGKCELQRIFDTYVGAQRTHRIENSLTYSKNKVLQKATHVVQSEVDKYVDDIMKEKNINPEKDASFKICMKMCLLQITGYKQLYLDVESVRKRPYDSDNLQHEELLMKLWNLLMPTKKLNARISKQWAEIGFQGDDPKTDFRGMGILGLINLVYFSENYTSEAHQILSRSNHPKLGYSYAIVGINLTEMAYSLLKSEALKFHLYNLVPGIPTMEHFHQFYCYLVYEFDKFWFEEEPESIMYFNLYREKFHEKIKGLLLDCNVALTLKV.

The ELMO domain occupies 126–282 (QHEELLMKLW…KFHEKIKGLL (157 aa)).

Alveolar cells (morphologically type II cells) and alveolar macrophages (at protein level). Expressed in brain, colon, heart, kidney, liver, lung, muscle, placenta, small intestine, spleen, stomach and testis. In lung it is expressed in alveolar macrophages and alveolar walls.

In terms of biological role, acts as a GTPase-activating protein (GAP) toward guanine nucleotide exchange factors like ARL2, ARL3, ARF1 and ARF6, but not for GTPases outside the Arf family. Regulates IFN-related antiviral responses. The polypeptide is ELMO domain-containing protein 2 (ELMOD2) (Homo sapiens (Human)).